The primary structure comprises 64 residues: DNA-binding protein 7b (64 aa).

This sequence belongs to the 7 kDa DNA-binding/endoribonuclease P2 family. As to quaternary structure, monomer.

It localises to the cytoplasm. In terms of biological role, can constrain negative DNA supercoils. May be involved in maintaining the integrity of the genome at high temperature. This Saccharolobus islandicus (strain HVE10/4) (Sulfolobus islandicus) protein is DNA-binding protein 7b.